The primary structure comprises 373 residues: MALKELLGSDAPLEKVCSALLEYESKRKSSENIDSESKKTNLLEDEQDDIEPVWLQLATLKFIGNNRKLIPYKIAIKNPVIPSSSEACLIVKDPQRVYKDLVNEAGLSKVVTRVIGLSKLKAKWNSYEQKRQLRDQFDIFLADDRVIPMLPRILGKTFYQKSKVPVPVKISKGTAEQLKREVVSAYGATYFNSAPCSSFMIKCGHVSNTSTELAENVESILQFVSKHIVPDGAKGIASIHLKTSQSIAIPLWNNPNLKELIASSRKVVTKETASSKRKSDEESLPSQKKQKKVEVAKESKDSKQQNVSDKKQVTVKEVPKKLSVKNAAKTTNRDEDSKGKKAKASPKVSQSSLKANGTTAIKKVKAGKNKVKH.

Positions 265-373 (RKVVTKETAS…VKAGKNKVKH (109 aa)) are disordered. Residues 292 to 320 (KVEVAKESKDSKQQNVSDKKQVTVKEVPK) are compositionally biased toward basic and acidic residues. Residues 347–359 (KVSQSSLKANGTT) show a composition bias toward polar residues. Residues 362–373 (KKVKAGKNKVKH) show a composition bias toward basic residues.

It belongs to the universal ribosomal protein uL1 family. Highly divergent. In terms of assembly, component of the 90S pre-ribosomes.

It localises to the nucleus. The protein localises to the nucleolus. In terms of biological role, involved in rRNA-processing and ribosome biosynthesis. The chain is Putative ribosome biogenesis protein C8F11.04 from Schizosaccharomyces pombe (strain 972 / ATCC 24843) (Fission yeast).